The primary structure comprises 361 residues: 3-dehydroquinate synthase (361 aa).

Residues 71–76 (DGEQFK), 105–109 (GVIGD), 129–130 (TT), K142, K151, and 169–172 (CLQT) each bind NAD(+). The Zn(2+) site is built by E184, H247, and H264.

The protein belongs to the sugar phosphate cyclases superfamily. Dehydroquinate synthase family. Requires Co(2+) as cofactor. Zn(2+) is required as a cofactor. It depends on NAD(+) as a cofactor.

It is found in the cytoplasm. The catalysed reaction is 7-phospho-2-dehydro-3-deoxy-D-arabino-heptonate = 3-dehydroquinate + phosphate. It participates in metabolic intermediate biosynthesis; chorismate biosynthesis; chorismate from D-erythrose 4-phosphate and phosphoenolpyruvate: step 2/7. Functionally, catalyzes the conversion of 3-deoxy-D-arabino-heptulosonate 7-phosphate (DAHP) to dehydroquinate (DHQ). In Edwardsiella ictaluri (strain 93-146), this protein is 3-dehydroquinate synthase.